A 200-amino-acid polypeptide reads, in one-letter code: Probable gluconokinase (200 aa).

Position 34–41 (34–41 (GVSGSGKT)) interacts with ATP.

The protein belongs to the gluconokinase GntK/GntV family.

The catalysed reaction is D-gluconate + ATP = 6-phospho-D-gluconate + ADP + H(+). It functions in the pathway carbohydrate acid metabolism; D-gluconate degradation. The polypeptide is Probable gluconokinase (Dictyostelium discoideum (Social amoeba)).